The primary structure comprises 552 residues: MAAKEVKFSDSARHKMVNGVNILADAVKVTLGPKGRNVVLERSYGSPTITKDGVSVAKEIELKDKFENMGAQMVKEVASKTSDVAGDGTTTATVLAQSIVKEGMKYVAAGMNPMDLKRGIDKAVVATVEELKKLSKPCTTGKEIAQVGSISANSDPEIGKIIADAMEKVGKEGVITVEDGSGLQNELEVVEGMQFDRGYLSPYFINNADRQIALLESPFILLHDKKISNIRDLLPVLEQVAKAGKPLLIIAEDVDGEALATLVVNNIRGILKTCAVKAPGFGDRRKAMLEDIAILTGGTVIAEEVGLSLEKATLAELGQAKRVEVGKEETTIIDGAGDTQNIEGRVKQIRAQIEEATSDYDKEKLQERVAKLAGGVALIKVGAATEVEMKEKKARVEDALHATRAAVEEGIVPGGGVALLRTRSAVSNLKGDNHDQDAGIKIVLRALEEPLRQIVANCGDEPSVVINKVLEGTENFGYNAASSEYGDMVQMGVLDPTKVTRYALQHAASIAGLMLTTDALVAEVPKEEGAGGGMGGGMGGMGGMGGMGGMDM.

ATP-binding positions include 30 to 33 (TLGP), lysine 51, 87 to 91 (DGTTT), glycine 415, 479 to 481 (NAA), and aspartate 495.

This sequence belongs to the chaperonin (HSP60) family. In terms of assembly, forms a cylinder of 14 subunits composed of two heptameric rings stacked back-to-back. Interacts with the co-chaperonin GroES.

The protein resides in the cytoplasm. It catalyses the reaction ATP + H2O + a folded polypeptide = ADP + phosphate + an unfolded polypeptide.. In terms of biological role, together with its co-chaperonin GroES, plays an essential role in assisting protein folding. The GroEL-GroES system forms a nano-cage that allows encapsulation of the non-native substrate proteins and provides a physical environment optimized to promote and accelerate protein folding. This is Chaperonin GroEL from Nitrosospira multiformis (strain ATCC 25196 / NCIMB 11849 / C 71).